Reading from the N-terminus, the 361-residue chain is Chorismate synthase (361 aa).

2 residues coordinate NADP(+): Arg48 and Arg54. FMN contacts are provided by residues Arg125–Ser127, Asn238–Ala239, Gly278, Lys293–Ser297, and Arg319.

The protein belongs to the chorismate synthase family. As to quaternary structure, homotetramer. FMNH2 is required as a cofactor.

It catalyses the reaction 5-O-(1-carboxyvinyl)-3-phosphoshikimate = chorismate + phosphate. It participates in metabolic intermediate biosynthesis; chorismate biosynthesis; chorismate from D-erythrose 4-phosphate and phosphoenolpyruvate: step 7/7. Functionally, catalyzes the anti-1,4-elimination of the C-3 phosphate and the C-6 proR hydrogen from 5-enolpyruvylshikimate-3-phosphate (EPSP) to yield chorismate, which is the branch point compound that serves as the starting substrate for the three terminal pathways of aromatic amino acid biosynthesis. This reaction introduces a second double bond into the aromatic ring system. The protein is Chorismate synthase of Escherichia coli O7:K1 (strain IAI39 / ExPEC).